Reading from the N-terminus, the 165-residue chain is MALNLQDKQAIVAEVSEVAKGALSAVVADSRGVTVDKMTELRKAGREAGVYMRVVRNTLLRRVVEGTQFECLKDAFVGPTLIAYSMEHPGAAARLFKDFAKANAKFEVKAAAFEGELIPASQIDRLATLPTYEEAIARLMATMKEASAGKLVRTLAAVRDAKEAA.

The protein belongs to the universal ribosomal protein uL10 family. In terms of assembly, part of the ribosomal stalk of the 50S ribosomal subunit. The N-terminus interacts with L11 and the large rRNA to form the base of the stalk. The C-terminus forms an elongated spine to which L12 dimers bind in a sequential fashion forming a multimeric L10(L12)X complex.

Its function is as follows. Forms part of the ribosomal stalk, playing a central role in the interaction of the ribosome with GTP-bound translation factors. This Enterobacter sp. (strain 638) protein is Large ribosomal subunit protein uL10.